A 199-amino-acid chain; its full sequence is MTLTAYLLILTAYLLGSICSAIIFCRLAGLPDPRQNGSHNPGATNVLRNGGKLAAIGVLLFDTLKGSLPVLIAFRCDLSPSAIGLIGLAACLGHIFPIFFQFRGGKGVATAFGVFFSISIIASTTMICAWLIVFLLTRFSSLSAVIMALTAPFYIWCFKPEFTFPVALICCLLIYRHHDNIQRLWRGQEERLWDKLKSK.

5 consecutive transmembrane segments (helical) span residues 5–25 (AYLL…IIFC), 54–74 (AAIG…LIAF), 82–102 (AIGL…FFQF), 114–134 (VFFS…LIVF), and 154–174 (YIWC…CLLI).

Belongs to the PlsY family. As to quaternary structure, probably interacts with PlsX.

Its subcellular location is the cell inner membrane. The catalysed reaction is an acyl phosphate + sn-glycerol 3-phosphate = a 1-acyl-sn-glycero-3-phosphate + phosphate. It functions in the pathway lipid metabolism; phospholipid metabolism. Functionally, catalyzes the transfer of an acyl group from acyl-phosphate (acyl-PO(4)) to glycerol-3-phosphate (G3P) to form lysophosphatidic acid (LPA). This enzyme utilizes acyl-phosphate as fatty acyl donor, but not acyl-CoA or acyl-ACP. In Haemophilus ducreyi (strain 35000HP / ATCC 700724), this protein is Glycerol-3-phosphate acyltransferase.